The sequence spans 793 residues: Plakophilin-3 (793 aa).

The disordered stretch occupies residues 56-82 (QLGQQPRHNGPAEPDGAAEAARGASRA). Residues 66-82 (PAEPDGAAEAARGASRA) are compositionally biased toward low complexity. An Omega-N-methylarginine modification is found at Arg81. 3 positions are modified to phosphoserine: Ser122, Ser179, and Ser182. Tyr194 carries the post-translational modification Phosphotyrosine. Residues 221-240 (SSSRAGGLDWPEATEGPPSR) form a disordered region. Ser239 bears the Phosphoserine mark. Thr249 bears the Phosphothreonine mark. Residue Arg260 is modified to Omega-N-methylarginine. Phosphoserine occurs at positions 282, 310, 311, and 328. Residues 282–285 (SLSL) form a required for interaction with SFN region. The interval 291-720 (LPDMRGLDSY…ADVLINIIAV (430 aa)) is required for interaction with GSK3B. ARM repeat units follow at residues 302-345 (GHRT…HKCY), 348-387 (AAAK…NLVY), 390-429 (ADNK…NLSS), 446-484 (TDLV…NLSS), 488-533 (ATRQ…NLSY), 592-633 (PKGL…NITA), 641-680 (VLSR…NLSR), and 685-726 (KDEM…NLVV). The segment at 513–793 (VGKCEDKSVE…GYRKEDFLGP (281 aa)) is required for binding to PKP2 mRNA.

Belongs to the beta-catenin family. In terms of assembly, found in a complex composed of CDH1, RAP1A and PKP3; PKP3 acts as a scaffold protein within the complex, the complex is required for CDH1 localization to mature desmosome cell junctions. Interacts with FXR1; the interaction facilitates the binding of PKP3 to PKP2 mRNA. Interacts (via ARM repeats) with GSK3B; the interaction may be involved in PKP3 protein degradation. Interacts with hyperphosphorylated and hypophosphorylated RB1; the interaction inhibits RB1 interaction with and repression of the transcription factor E2F1, potentially via sequestering RB1 to the cytoplasm. Interacts with CDKN1A; the interaction sequesters CDKN1A to the cytoplasm thereby repressing its role as an inhibitor of CDK4- and CDK6-driven RB1 phosphorylation. Interacts (via N-terminus) with SFN; the interaction maintains the cytoplasmic pool of PKP3, facilitates PKP3 exchange at desmosomes and restricts PKP3 localization to existing desmosome cell junctions. Interacts (via N-terminus) with SFN; the interaction maintains the cytoplasmic pool of PKP3 and restricts PKP3 localization to existing desmosome cell junctions. Interacts (via N-terminus) with JUP; the interaction is required for PKP3 localization to desmosome cell-cell junctions. In terms of processing, phosphorylated at Ser-282 when localized to the cytoplasm, PKP3 at desmosome cell junctions is not phosphorylated. Phosphorylation at Try-194 by SRC is induced by reactive oxygen species and potentially acts as a release mechanism from desmosome cell-cell junctions.

It localises to the nucleus. Its subcellular location is the cell junction. The protein resides in the desmosome. It is found in the cytoplasm. The protein localises to the cell membrane. It localises to the adherens junction. Its function is as follows. A component of desmosome cell-cell junctions which are required for positive regulation of cellular adhesion. Required for the localization of DSG2, DSP and PKP2 to mature desmosome junctions. May also play a role in the maintenance of DSG3 protein abundance in keratinocytes. Required for the formation of DSP-containing desmosome precursors in the cytoplasm during desmosome assembly. Also regulates the accumulation of CDH1 to mature desmosome junctions, via cAMP-dependent signaling and its interaction with activated RAP1A. Positively regulates the stabilization of PKP2 mRNA and therefore protein abundance, via its interaction with FXR1, may also regulate the protein abundance of DSP via the same mechanism. May also regulate the protein abundance of the desmosome component PKP1. Required for the organization of desmosome junctions at intercellular borders between basal keratinocytes of the epidermis, as a result plays a role in maintenance of the dermal barrier and regulation of the dermal inflammatory response. Required during epidermal keratinocyte differentiation for cell adherence at tricellular cell-cell contacts, via regulation of the timely formation of adherens junctions and desmosomes in a calcium-dependent manner, and may also play a role in the organization of the intracellular actin fiber belt. Acts as a negative regulator of the inflammatory response in hematopoietic cells of the skin and intestine, via modulation of proinflammatory cytokine production. Important for epithelial barrier maintenance in the intestine to reduce intestinal permeability, thereby plays a role in protection from intestinal-derived endotoxemia. Required for the development of hair follicles, via a role in the regulation of inner root sheaf length, correct alignment and anterior-posterior polarity of hair follicles. Promotes proliferation and cell-cycle G1/S phase transition of keratinocytes. Promotes E2F1-driven transcription of G1/S phase promoting genes by acting to release E2F1 from its inhibitory interaction with RB1, via sequestering RB1 and CDKN1A to the cytoplasm and thereby increasing CDK4- and CDK6-driven phosphorylation of RB1. May act as a scaffold protein to facilitate MAPK phosphorylation of RPS6KA protein family members and subsequently promote downstream EGFR signaling. May play a role in the positive regulation of transcription of Wnt-mediated TCF-responsive target genes. The chain is Plakophilin-3 (PKP3) from Bos taurus (Bovine).